A 199-amino-acid chain; its full sequence is Superoxide dismutase [Mn/Fe] (199 aa).

Residues His-27, His-81, Asp-161, and His-165 each coordinate Fe(3+). Mn(2+)-binding residues include His-27, His-81, Asp-161, and His-165.

This sequence belongs to the iron/manganese superoxide dismutase family. As to quaternary structure, homodimer. Mn(2+) serves as cofactor. Requires Fe(3+) as cofactor.

It catalyses the reaction 2 superoxide + 2 H(+) = H2O2 + O2. In terms of biological role, destroys superoxide anion radicals which are normally produced within the cells and which are toxic to biological systems. Catalyzes the dismutation of superoxide anion radicals into O2 and H2O2 by successive reduction and oxidation of the transition metal ion at the active site. Also contributes to the inhibition of lipid oxidation. Manganese-preferring enzyme, less active with iron than with manganese. This is Superoxide dismutase [Mn/Fe] (sodA) from Staphylococcus xylosus.